A 37-amino-acid polypeptide reads, in one-letter code: Large ribosomal subunit protein bL36 (37 aa).

Belongs to the bacterial ribosomal protein bL36 family.

The sequence is that of Large ribosomal subunit protein bL36 from Francisella tularensis subsp. mediasiatica (strain FSC147).